Consider the following 213-residue polypeptide: MASLFKKKTVDDVIKEQNRELRGTQRAIIRDRAALEKQEKQLELEIKKMAKIGNKEACKVLAKQLVHLRKQKTRTFAVSSKVTSMSTQTKVMNSQMKMAGAMSTTAKTMQAVNKKMDPQKTLQTMQNFQKENMKMEMTEEMINDTLDDIFDGSDDEEESQDIVNQVLDEIGIEISGKMAKAPSAARSLPSASTSKATISDEEIERQLKALGVD.

Ala2 is modified (N-acetylalanine). Positions 25–55 (QRAIIRDRAALEKQEKQLELEIKKMAKIGNK) form a coiled coil. Residues 179–194 (AKAPSAARSLPSASTS) show a composition bias toward low complexity. The disordered stretch occupies residues 179-199 (AKAPSAARSLPSASTSKATIS). Ser199 carries the post-translational modification Phosphoserine. The short motif at 201-211 (EEIERQLKALG) is the MIT-interacting motif element.

Belongs to the SNF7 family. As to quaternary structure, probable core component of the endosomal sorting required for transport complex III (ESCRT-III). ESCRT-III components are thought to multimerize to form a flat lattice on the perimeter membrane of the endosome. Several assembly forms of ESCRT-III may exist that interact and act sequentially. Interacts with CHMP2A. Interacts with VPS4A. Interacts with VPS4B; the interaction is direct. Widely expressed. Expressed in brain, heart, skeletal muscle, spleen, kidney, liver, small intestine, pancreas, lung, placenta and leukocytes. In brain, it is expressed in cerebellum, cerebral cortex, medulla, spinal cord, occipital lobe, frontal lobe, temporal lobe and putamen.

The protein resides in the cytoplasm. The protein localises to the cytosol. It localises to the late endosome membrane. In terms of biological role, probable core component of the endosomal sorting required for transport complex III (ESCRT-III) which is involved in multivesicular bodies (MVBs) formation and sorting of endosomal cargo proteins into MVBs. MVBs contain intraluminal vesicles (ILVs) that are generated by invagination and scission from the limiting membrane of the endosome and mostly are delivered to lysosomes enabling degradation of membrane proteins, such as stimulated growth factor receptors, lysosomal enzymes and lipids. The MVB pathway appears to require the sequential function of ESCRT-O, -I,-II and -III complexes. ESCRT-III proteins mostly dissociate from the invaginating membrane before the ILV is released. The ESCRT machinery also functions in topologically equivalent membrane fission events, such as the terminal stages of cytokinesis and the budding of enveloped viruses (HIV-1 and other lentiviruses). ESCRT-III proteins are believed to mediate the necessary vesicle extrusion and/or membrane fission activities, possibly in conjunction with the AAA ATPase VPS4. The protein is Charged multivesicular body protein 2b (CHMP2B) of Homo sapiens (Human).